The chain runs to 84 residues: Small ribosomal subunit protein uS17 (84 aa).

This sequence belongs to the universal ribosomal protein uS17 family. As to quaternary structure, part of the 30S ribosomal subunit.

Its function is as follows. One of the primary rRNA binding proteins, it binds specifically to the 5'-end of 16S ribosomal RNA. This is Small ribosomal subunit protein uS17 from Sodalis glossinidius (strain morsitans).